The following is a 688-amino-acid chain: Translation initiation factor IF-2 (688 aa).

A disordered region spans residues 53-101 (GAEKPSVADEFEVEEKVVRSKKNSNKNKKKGKANEDKRQDNFAGRQQTP). The segment covering 71-83 (RSKKNSNKNKKKG) has biased composition (basic residues). One can recognise a tr-type G domain in the interval 190-359 (ERPAVVTIMG…LLVSEVEEYK (170 aa)). The interval 199–206 (GHVDHGKT) is G1. Residue 199–206 (GHVDHGKT) coordinates GTP. The tract at residues 224–228 (GITQH) is G2. Positions 245–248 (DTPG) are G3. Residues 245–249 (DTPGH) and 299–302 (NKMD) contribute to the GTP site. A G4 region spans residues 299-302 (NKMD). The tract at residues 335-337 (SAI) is G5.

It belongs to the TRAFAC class translation factor GTPase superfamily. Classic translation factor GTPase family. IF-2 subfamily.

Its subcellular location is the cytoplasm. One of the essential components for the initiation of protein synthesis. Protects formylmethionyl-tRNA from spontaneous hydrolysis and promotes its binding to the 30S ribosomal subunits. Also involved in the hydrolysis of GTP during the formation of the 70S ribosomal complex. The polypeptide is Translation initiation factor IF-2 (Bacillus mycoides (strain KBAB4) (Bacillus weihenstephanensis)).